Consider the following 398-residue polypeptide: NADH-quinone oxidoreductase subunit D (398 aa).

It belongs to the complex I 49 kDa subunit family. As to quaternary structure, NDH-1 is composed of 14 different subunits. Subunits NuoB, C, D, E, F, and G constitute the peripheral sector of the complex.

Its subcellular location is the cell inner membrane. It catalyses the reaction a quinone + NADH + 5 H(+)(in) = a quinol + NAD(+) + 4 H(+)(out). Functionally, NDH-1 shuttles electrons from NADH, via FMN and iron-sulfur (Fe-S) centers, to quinones in the respiratory chain. The immediate electron acceptor for the enzyme in this species is believed to be ubiquinone. Couples the redox reaction to proton translocation (for every two electrons transferred, four hydrogen ions are translocated across the cytoplasmic membrane), and thus conserves the redox energy in a proton gradient. The chain is NADH-quinone oxidoreductase subunit D from Bradyrhizobium sp. (strain ORS 278).